Reading from the N-terminus, the 91-residue chain is Putative regulatory protein Cyan7425_4125 (91 aa).

It belongs to the RemA family.

This chain is Putative regulatory protein Cyan7425_4125, found in Cyanothece sp. (strain PCC 7425 / ATCC 29141).